A 138-amino-acid polypeptide reads, in one-letter code: Transcription antitermination protein NusB (138 aa).

This sequence belongs to the NusB family.

In terms of biological role, involved in transcription antitermination. Required for transcription of ribosomal RNA (rRNA) genes. Binds specifically to the boxA antiterminator sequence of the ribosomal RNA (rrn) operons. The sequence is that of Transcription antitermination protein NusB from Yersinia enterocolitica serotype O:8 / biotype 1B (strain NCTC 13174 / 8081).